The following is a 415-amino-acid chain: Acetyl-CoA acetyltransferase 1 (415 aa).

C99 (acyl-thioester intermediate) is an active-site residue. CoA is bound at residue K239. Residue A256 coordinates K(+). S260 contacts CoA. V357 is a binding site for K(+). Catalysis depends on proton acceptor residues H361 and C391.

This sequence belongs to the thiolase-like superfamily. Thiolase family. In terms of tissue distribution, expressed in the vascular system of roots, cotyledons, young leaves, fully expanded leaves, stems, flowers, and funiculi of siliques.

Its subcellular location is the cytoplasm. The protein localises to the peroxisome. The catalysed reaction is 2 acetyl-CoA = acetoacetyl-CoA + CoA. The protein operates within metabolic intermediate biosynthesis; (R)-mevalonate biosynthesis; (R)-mevalonate from acetyl-CoA: step 1/3. Its function is as follows. Catalyzes the condensation of two molecules of acetyl-CoA to produce acetoacetyl-CoA. The sequence is that of Acetyl-CoA acetyltransferase 1 from Arabidopsis thaliana (Mouse-ear cress).